Reading from the N-terminus, the 173-residue chain is Bifunctional protein PyrR (173 aa).

Residues 93–105 (IILVDDVLYTGRT) carry the PRPP-binding motif.

The protein belongs to the purine/pyrimidine phosphoribosyltransferase family. PyrR subfamily. Homodimer and homohexamer; in equilibrium.

It carries out the reaction UMP + diphosphate = 5-phospho-alpha-D-ribose 1-diphosphate + uracil. Its function is as follows. Regulates transcriptional attenuation of the pyrimidine nucleotide (pyr) operon by binding in a uridine-dependent manner to specific sites on pyr mRNA. This disrupts an antiterminator hairpin in the RNA and favors formation of a downstream transcription terminator, leading to a reduced expression of downstream genes. In terms of biological role, also displays a weak uracil phosphoribosyltransferase activity which is not physiologically significant. The protein is Bifunctional protein PyrR of Streptococcus equi subsp. zooepidemicus (strain H70).